The following is a 328-amino-acid chain: Malate dehydrogenase (328 aa).

11–17 (GAAGQIG) is an NAD(+) binding site. Substrate contacts are provided by Arg94 and Arg100. Residues Asn107, Gln114, and 131-133 (VGN) each bind NAD(+). Positions 133 and 164 each coordinate substrate. The active-site Proton acceptor is His189.

This sequence belongs to the LDH/MDH superfamily. MDH type 2 family.

The enzyme catalyses (S)-malate + NAD(+) = oxaloacetate + NADH + H(+). In terms of biological role, catalyzes the reversible oxidation of malate to oxaloacetate. The chain is Malate dehydrogenase from Stenotrophomonas maltophilia (strain K279a).